Here is a 492-residue protein sequence, read N- to C-terminus: Glutamyl-tRNA(Gln) amidotransferase subunit A (492 aa).

Active-site charge relay system residues include Lys78 and Ser158. Ser182 (acyl-ester intermediate) is an active-site residue.

This sequence belongs to the amidase family. GatA subfamily. Heterotrimer of A, B and C subunits.

The catalysed reaction is L-glutamyl-tRNA(Gln) + L-glutamine + ATP + H2O = L-glutaminyl-tRNA(Gln) + L-glutamate + ADP + phosphate + H(+). In terms of biological role, allows the formation of correctly charged Gln-tRNA(Gln) through the transamidation of misacylated Glu-tRNA(Gln) in organisms which lack glutaminyl-tRNA synthetase. The reaction takes place in the presence of glutamine and ATP through an activated gamma-phospho-Glu-tRNA(Gln). The protein is Glutamyl-tRNA(Gln) amidotransferase subunit A of Rhodopseudomonas palustris (strain BisB18).